Reading from the N-terminus, the 175-residue chain is Nucleoside-triphosphatase THEP1 (175 aa).

ATP contacts are provided by residues 15–22 and 106–113; these read GNPGVGKT and VLAIDEIG.

It belongs to the THEP1 NTPase family.

It carries out the reaction a ribonucleoside 5'-triphosphate + H2O = a ribonucleoside 5'-diphosphate + phosphate + H(+). In terms of biological role, has nucleotide phosphatase activity towards ATP, GTP, CTP, TTP and UTP. May hydrolyze nucleoside diphosphates with lower efficiency. In Saccharolobus solfataricus (strain ATCC 35092 / DSM 1617 / JCM 11322 / P2) (Sulfolobus solfataricus), this protein is Nucleoside-triphosphatase THEP1.